Here is a 256-residue protein sequence, read N- to C-terminus: DNA repair protein RecO (256 aa).

This sequence belongs to the RecO family.

Involved in DNA repair and RecF pathway recombination. This chain is DNA repair protein RecO, found in Delftia acidovorans (strain DSM 14801 / SPH-1).